We begin with the raw amino-acid sequence, 241 residues long: Octanoyltransferase (241 aa).

The 186-residue stretch at 43 to 228 (ADTPDEIWLV…RLTANLDGSP (186 aa)) folds into the BPL/LPL catalytic domain. Residues 83-90 (RGGQITYH), 159-161 (ALG), and 172-174 (GVS) contribute to the substrate site. The active-site Acyl-thioester intermediate is the cysteine 190.

Belongs to the LipB family.

The protein resides in the cytoplasm. The enzyme catalyses octanoyl-[ACP] + L-lysyl-[protein] = N(6)-octanoyl-L-lysyl-[protein] + holo-[ACP] + H(+). The protein operates within protein modification; protein lipoylation via endogenous pathway; protein N(6)-(lipoyl)lysine from octanoyl-[acyl-carrier-protein]: step 1/2. In terms of biological role, catalyzes the transfer of endogenously produced octanoic acid from octanoyl-acyl-carrier-protein onto the lipoyl domains of lipoate-dependent enzymes. Lipoyl-ACP can also act as a substrate although octanoyl-ACP is likely to be the physiological substrate. The chain is Octanoyltransferase from Paraburkholderia phytofirmans (strain DSM 17436 / LMG 22146 / PsJN) (Burkholderia phytofirmans).